Consider the following 485-residue polypeptide: REST corepressor 1 (485 aa).

2 disordered regions span residues 1-26 (MPAMVEKGPEVSGKRRGRNNAAASAS) and 49-110 (AAAS…VGPQ). Composition is skewed to low complexity over residues 49 to 64 (AAASSASAAAASAAAA) and 74 to 95 (AAAAPNGNSSSNSWEEGSSGSS). The segment at 78 to 257 (PNGNSSSNSW…RHARKQKRER (180 aa)) is interaction with HDAC1. One can recognise an ELM2 domain in the interval 103 to 189 (GGMRVGPQYQ…KSLADLPNFT (87 aa)). Lys-122 participates in a covalent cross-link: Glycyl lysine isopeptide (Lys-Gly) (interchain with G-Cter in SUMO2). Ser-127 bears the Phosphoserine mark. Residues 190–241 (PFPDEWTVEDKVLFEQAFSFHGKTFHRIQQMLPDKSIASLVKFYYSWKKTRT) enclose the SANT 1 domain. Positions 244 to 273 (SVMDRHARKQKREREESEDELEEANGNNPI) form a coiled coil. Positions 244 to 314 (SVMDRHARKQ…AKNRAKRKPP (71 aa)) are disordered. Ser-260 carries the phosphoserine modification. Basic and acidic residues predominate over residues 278–288 (DQNKESKKEVP). The segment at 296-384 (VKKEKHSTQA…LPEVIQKCNA (89 aa)) is interaction with KDM1A. Lys-297 is covalently cross-linked (Glycyl lysine isopeptide (Lys-Gly) (interchain with G-Cter in SUMO2)). Residues 334-369 (ATTVLRQLDMELVSVKRQIQNIKQTNSALKEKLDGG) are a coiled coil. In terms of domain architecture, SANT 2 spans 381–432 (KCNARWTTEEQLLAVQAIRKYGRDFQAISDVIGNKSVVQVKNFFVNYRRRFN). Residues 442-485 (AEHGKEETNGPSNQKPVKSPDNSIKMPEEEDEAPVLDVRYASAS) form a disordered region. Positions 450-463 (NGPSNQKPVKSPDN) are enriched in polar residues. A Phosphoserine modification is found at Ser-460. Residue Lys-466 forms a Glycyl lysine isopeptide (Lys-Gly) (interchain with G-Cter in SUMO2) linkage.

It belongs to the CoREST family. In terms of assembly, interacts directly with GFI1 and GFI1B in a RCOR/GFI/KDM1A/HDAC complex. Interacts with INMS1. Component of a BHC histone deacetylase complex that contains HDAC1, HDAC2, HMG20B/BRAF35, KDM1A, RCOR1/CoREST and PHF21A/BHC80. The BHC complex may also contain ZMYM2, ZNF217, ZMYM3, GSE1 and GTF2I. Interacts with REST. Interacts with the SMARCE1/BAF57, suggesting that the BHC complex may recruit the ATP-dependent chromatin-remodeling SWI-SNF complex. Interacts with SOX2. (Microbial infection) Interacts with herpes virus HSV-1 ICP0 protein; the interaction leads to the disruption of the BHC complex, thereby preventing the BHC complex from repressing transcription of viral genes. In terms of processing, phosphorylated by HSV-1 protein kinases in case of infection. As to expression, ubiquitously expressed.

The protein localises to the nucleus. Functionally, essential component of the BHC complex, a corepressor complex that represses transcription of neuron-specific genes in non-neuronal cells. The BHC complex is recruited at RE1/NRSE sites by REST and acts by deacetylating and demethylating specific sites on histones, thereby acting as a chromatin modifier. In the BHC complex, it serves as a molecular beacon for the recruitment of molecular machinery, including MeCP2 and SUV39H1, that imposes silencing across a chromosomal interval. Plays a central role in demethylation of Lys-4 of histone H3 by promoting demethylase activity of KDM1A on core histones and nucleosomal substrates. It also protects KDM1A from the proteasome. Component of a RCOR/GFI/KDM1A/HDAC complex that suppresses, via histone deacetylase (HDAC) recruitment, a number of genes implicated in multilineage blood cell development and controls hematopoietic differentiation. In Homo sapiens (Human), this protein is REST corepressor 1 (RCOR1).